Consider the following 302-residue polypeptide: Phosphoribosylaminoimidazole-succinocarboxamide synthase (302 aa).

Belongs to the SAICAR synthetase family.

It carries out the reaction 5-amino-1-(5-phospho-D-ribosyl)imidazole-4-carboxylate + L-aspartate + ATP = (2S)-2-[5-amino-1-(5-phospho-beta-D-ribosyl)imidazole-4-carboxamido]succinate + ADP + phosphate + 2 H(+). It participates in purine metabolism; IMP biosynthesis via de novo pathway; 5-amino-1-(5-phospho-D-ribosyl)imidazole-4-carboxamide from 5-amino-1-(5-phospho-D-ribosyl)imidazole-4-carboxylate: step 1/2. In Cupriavidus taiwanensis (strain DSM 17343 / BCRC 17206 / CCUG 44338 / CIP 107171 / LMG 19424 / R1) (Ralstonia taiwanensis (strain LMG 19424)), this protein is Phosphoribosylaminoimidazole-succinocarboxamide synthase.